The following is a 345-amino-acid chain: Phosphate acyltransferase (345 aa).

The protein belongs to the PlsX family. In terms of assembly, homodimer. Probably interacts with PlsY.

The protein localises to the cytoplasm. It carries out the reaction a fatty acyl-[ACP] + phosphate = an acyl phosphate + holo-[ACP]. The protein operates within lipid metabolism; phospholipid metabolism. Catalyzes the reversible formation of acyl-phosphate (acyl-PO(4)) from acyl-[acyl-carrier-protein] (acyl-ACP). This enzyme utilizes acyl-ACP as fatty acyl donor, but not acyl-CoA. The chain is Phosphate acyltransferase from Levilactobacillus brevis (strain ATCC 367 / BCRC 12310 / CIP 105137 / JCM 1170 / LMG 11437 / NCIMB 947 / NCTC 947) (Lactobacillus brevis).